Reading from the N-terminus, the 198-residue chain is Glycerol-3-phosphate acyltransferase (198 aa).

The next 5 membrane-spanning stretches (helical) occupy residues 5–25 (LILL…LWIG), 56–76 (SIVT…PFFF), 84–104 (FWLL…FAGF), 114–134 (AGVI…IFLL), and 158–178 (LFMG…FVVW).

This sequence belongs to the PlsY family. As to quaternary structure, probably interacts with PlsX.

The protein resides in the cell membrane. It catalyses the reaction an acyl phosphate + sn-glycerol 3-phosphate = a 1-acyl-sn-glycero-3-phosphate + phosphate. It functions in the pathway lipid metabolism; phospholipid metabolism. Functionally, catalyzes the transfer of an acyl group from acyl-phosphate (acyl-PO(4)) to glycerol-3-phosphate (G3P) to form lysophosphatidic acid (LPA). This enzyme utilizes acyl-phosphate as fatty acyl donor, but not acyl-CoA or acyl-ACP. The protein is Glycerol-3-phosphate acyltransferase of Listeria welshimeri serovar 6b (strain ATCC 35897 / DSM 20650 / CCUG 15529 / CIP 8149 / NCTC 11857 / SLCC 5334 / V8).